Consider the following 29-residue polypeptide: Protein YldA (29 aa).

A helical transmembrane segment spans residues 5–25 (FYILIGFLIMAAIIVMAVLYL).

The protein localises to the cell inner membrane. This chain is Protein YldA, found in Escherichia coli (strain K12).